The sequence spans 428 residues: Magnesium transporter MRS2-C (428 aa).

Helical transmembrane passes span 364–384 and 400–420; these read LLLTTATFVVAIFGVVSGVFG and WTLVITGVCGLVIFCCFIWYF. Residues 384 to 386 carry the Required for magnesium transport activity motif; it reads GMN.

The protein belongs to the CorA metal ion transporter (MIT) (TC 1.A.35.5) family.

The protein resides in the membrane. In terms of biological role, magnesium transporter that may mediate the influx of magnesium. The sequence is that of Magnesium transporter MRS2-C from Oryza sativa subsp. indica (Rice).